The following is a 186-amino-acid chain: MYRYIKGIVTQINPQHIVVENNGVGYLVLSPVPYQYKIGEETTVVTYLHVREDIFQLYGFKDEETLNLFLKLISVSGIGPKSAMSIVAFDDTNKIIAAIETSDAKYLTKFPGIGMKSAQQIILDLKGKLVNDELDMQLLSDNSKDVAAALEALGYNKKEIAKSLKHVNFDQDLNKALKEALAILLK.

The interval 1-61 is domain I; it reads MYRYIKGIVT…EDIFQLYGFK (61 aa). The domain II stretch occupies residues 62 to 134; that stretch reads DEETLNLFLK…LKGKLVNDEL (73 aa). The tract at residues 134–137 is flexible linker; sequence LDMQ. The interval 138-186 is domain III; sequence LLSDNSKDVAAALEALGYNKKEIAKSLKHVNFDQDLNKALKEALAILLK.

This sequence belongs to the RuvA family. In terms of assembly, homotetramer. Forms an RuvA(8)-RuvB(12)-Holliday junction (HJ) complex. HJ DNA is sandwiched between 2 RuvA tetramers; dsDNA enters through RuvA and exits via RuvB. An RuvB hexamer assembles on each DNA strand where it exits the tetramer. Each RuvB hexamer is contacted by two RuvA subunits (via domain III) on 2 adjacent RuvB subunits; this complex drives branch migration. In the full resolvosome a probable DNA-RuvA(4)-RuvB(12)-RuvC(2) complex forms which resolves the HJ.

Its subcellular location is the cytoplasm. In terms of biological role, the RuvA-RuvB-RuvC complex processes Holliday junction (HJ) DNA during genetic recombination and DNA repair, while the RuvA-RuvB complex plays an important role in the rescue of blocked DNA replication forks via replication fork reversal (RFR). RuvA specifically binds to HJ cruciform DNA, conferring on it an open structure. The RuvB hexamer acts as an ATP-dependent pump, pulling dsDNA into and through the RuvAB complex. HJ branch migration allows RuvC to scan DNA until it finds its consensus sequence, where it cleaves and resolves the cruciform DNA. The sequence is that of Holliday junction branch migration complex subunit RuvA from Acholeplasma laidlawii (strain PG-8A).